The sequence spans 259 residues: MLLKAASTFSLLNIHGEKKDISPLFSSSSSISSPVSSGKSGNLSFPLRASKSSTTTTSTLSGVVFEPFEEVKKEMDLVPSGQQLSLARHLYSPECEAAVNEQINVEYNVSYVYHALYAYFDRDNVALKGLAKFFKESSVEEREHAELLMEYQNKRGGRVKLQPMVLPQSEFDHPEKGDALYAMELALSLEKLVNEKLLNLHSVASKNDDVQLADFIESVFLNEQVEAIKKISEYVSQLRRLGKGHGTWHFDQELLGAAA.

A chloroplast-targeting transit peptide spans methionine 1 to alanine 49. The interval serine 50–arginine 88 is extension peptide (EP). In terms of domain architecture, Ferritin-like diiron spans histidine 89–glycine 242. Fe cation-binding residues include glutamate 106, glutamate 141, histidine 144, glutamate 190, and glutamine 224.

This sequence belongs to the ferritin family. As to quaternary structure, oligomer of 24 subunits. There are two types of subunits: L (light) chain and H (heavy) chain. The major chain can be light or heavy, depending on the species and tissue type. The functional molecule forms a roughly spherical shell with a diameter of 12 nm and contains a central cavity into which the insoluble mineral iron core is deposited.

It is found in the plastid. The protein resides in the chloroplast. It catalyses the reaction 4 Fe(2+) + O2 + 4 H(+) = 4 Fe(3+) + 2 H2O. Functionally, stores iron in a soluble, non-toxic, readily available form. Important for iron homeostasis. Has ferroxidase activity. Iron is taken up in the ferrous form and deposited as ferric hydroxides after oxidation. This chain is Ferritin-3, chloroplastic (FER3), found in Arabidopsis thaliana (Mouse-ear cress).